The following is a 411-amino-acid chain: Serine hydroxymethyltransferase (411 aa).

(6S)-5,6,7,8-tetrahydrofolate-binding positions include Leu119 and 123 to 125 (GHL). Residue Lys228 is modified to N6-(pyridoxal phosphate)lysine. 351–353 (SPF) contributes to the (6S)-5,6,7,8-tetrahydrofolate binding site.

Belongs to the SHMT family. Homodimer. The cofactor is pyridoxal 5'-phosphate.

It is found in the cytoplasm. It carries out the reaction (6R)-5,10-methylene-5,6,7,8-tetrahydrofolate + glycine + H2O = (6S)-5,6,7,8-tetrahydrofolate + L-serine. The protein operates within one-carbon metabolism; tetrahydrofolate interconversion. It functions in the pathway amino-acid biosynthesis; glycine biosynthesis; glycine from L-serine: step 1/1. Its function is as follows. Catalyzes the reversible interconversion of serine and glycine with tetrahydrofolate (THF) serving as the one-carbon carrier. This reaction serves as the major source of one-carbon groups required for the biosynthesis of purines, thymidylate, methionine, and other important biomolecules. Also exhibits THF-independent aldolase activity toward beta-hydroxyamino acids, producing glycine and aldehydes, via a retro-aldol mechanism. The polypeptide is Serine hydroxymethyltransferase (Clostridium botulinum (strain Alaska E43 / Type E3)).